An 875-amino-acid polypeptide reads, in one-letter code: Alanine--tRNA ligase (875 aa).

Positions 564, 568, 666, and 670 each coordinate Zn(2+).

This sequence belongs to the class-II aminoacyl-tRNA synthetase family. In terms of assembly, homotetramer. Zn(2+) is required as a cofactor.

The protein resides in the cytoplasm. It catalyses the reaction tRNA(Ala) + L-alanine + ATP = L-alanyl-tRNA(Ala) + AMP + diphosphate. Catalyzes the attachment of alanine to tRNA(Ala) in a two-step reaction: alanine is first activated by ATP to form Ala-AMP and then transferred to the acceptor end of tRNA(Ala). Also edits incorrectly charged Ser-tRNA(Ala) and Gly-tRNA(Ala) via its editing domain. This chain is Alanine--tRNA ligase, found in Sodalis glossinidius (strain morsitans).